A 493-amino-acid chain; its full sequence is UDP-N-acetylmuramoyl-L-alanyl-D-glutamate--2,6-diaminopimelate ligase (493 aa).

Position 32 (threonine 32) interacts with UDP-N-acetyl-alpha-D-muramoyl-L-alanyl-D-glutamate. Residue glycine 110–threonine 116 coordinates ATP. UDP-N-acetyl-alpha-D-muramoyl-L-alanyl-D-glutamate contacts are provided by residues asparagine 151, threonine 152 to threonine 153, serine 179, and arginine 187. Lysine 219 is subject to N6-carboxylysine. Meso-2,6-diaminopimelate is bound by residues arginine 386, aspartate 410–arginine 413, glycine 460, and glutamate 464. Positions aspartate 410–arginine 413 match the Meso-diaminopimelate recognition motif motif.

The protein belongs to the MurCDEF family. MurE subfamily. Requires Mg(2+) as cofactor. In terms of processing, carboxylation is probably crucial for Mg(2+) binding and, consequently, for the gamma-phosphate positioning of ATP.

The protein localises to the cytoplasm. The catalysed reaction is UDP-N-acetyl-alpha-D-muramoyl-L-alanyl-D-glutamate + meso-2,6-diaminopimelate + ATP = UDP-N-acetyl-alpha-D-muramoyl-L-alanyl-gamma-D-glutamyl-meso-2,6-diaminopimelate + ADP + phosphate + H(+). It functions in the pathway cell wall biogenesis; peptidoglycan biosynthesis. Its function is as follows. Catalyzes the addition of meso-diaminopimelic acid to the nucleotide precursor UDP-N-acetylmuramoyl-L-alanyl-D-glutamate (UMAG) in the biosynthesis of bacterial cell-wall peptidoglycan. This is UDP-N-acetylmuramoyl-L-alanyl-D-glutamate--2,6-diaminopimelate ligase from Lactiplantibacillus plantarum (strain ATCC BAA-793 / NCIMB 8826 / WCFS1) (Lactobacillus plantarum).